Consider the following 376-residue polypeptide: Putative glutamate--cysteine ligase 2-1 (376 aa).

It belongs to the glutamate--cysteine ligase type 2 family. YbdK subfamily.

It carries out the reaction L-cysteine + L-glutamate + ATP = gamma-L-glutamyl-L-cysteine + ADP + phosphate + H(+). In terms of biological role, ATP-dependent carboxylate-amine ligase which exhibits weak glutamate--cysteine ligase activity. The sequence is that of Putative glutamate--cysteine ligase 2-1 from Mycobacterium sp. (strain KMS).